The primary structure comprises 294 residues: Putative glucose-6-phosphate 1-epimerase (294 aa).

Substrate-binding residues include Arg74 and Arg99. His164 is a catalytic residue. Asp208 is a substrate binding site. Glu267 is an active-site residue.

This sequence belongs to the glucose-6-phosphate 1-epimerase family. Monomer in solution.

It catalyses the reaction alpha-D-glucose 6-phosphate = beta-D-glucose 6-phosphate. The polypeptide is Putative glucose-6-phosphate 1-epimerase (yeaD) (Escherichia coli (strain K12)).